Consider the following 515-residue polypeptide: 2-isopropylmalate synthase (515 aa).

Residues 4–266 (IKIFDTTLRD…ETGLILKETK (263 aa)) enclose the Pyruvate carboxyltransferase domain. Mn(2+)-binding residues include D13, H201, H203, and N237. Positions 392–515 (KLIQFGVSYD…ANLTRLVYES (124 aa)) are regulatory domain.

It belongs to the alpha-IPM synthase/homocitrate synthase family. LeuA type 1 subfamily. In terms of assembly, homodimer. The cofactor is Mn(2+).

It localises to the cytoplasm. It catalyses the reaction 3-methyl-2-oxobutanoate + acetyl-CoA + H2O = (2S)-2-isopropylmalate + CoA + H(+). It functions in the pathway amino-acid biosynthesis; L-leucine biosynthesis; L-leucine from 3-methyl-2-oxobutanoate: step 1/4. Catalyzes the condensation of the acetyl group of acetyl-CoA with 3-methyl-2-oxobutanoate (2-ketoisovalerate) to form 3-carboxy-3-hydroxy-4-methylpentanoate (2-isopropylmalate). This chain is 2-isopropylmalate synthase, found in Oceanobacillus iheyensis (strain DSM 14371 / CIP 107618 / JCM 11309 / KCTC 3954 / HTE831).